Reading from the N-terminus, the 319-residue chain is Probable NAD(P)H-dependent D-xylose reductase xyl1 (319 aa).

The active-site Proton donor is the Y50. H112 is a substrate binding site. NAD(+)-binding positions include S166–N167, S215–E224, and K271–N281.

It belongs to the aldo/keto reductase family.

It carries out the reaction xylitol + NAD(+) = D-xylose + NADH + H(+). The catalysed reaction is xylitol + NADP(+) = D-xylose + NADPH + H(+). It participates in carbohydrate metabolism; D-xylose degradation. Catalyzes the initial reaction in the xylose utilization pathway by reducing D-xylose into xylitol. Xylose is a major component of hemicelluloses such as xylan. Most fungi utilize D-xylose via three enzymatic reactions, xylose reductase (XR), xylitol dehydrogenase (XDH), and xylulokinase, to form xylulose 5-phosphate, which enters pentose phosphate pathway. The chain is Probable NAD(P)H-dependent D-xylose reductase xyl1 (xyl1) from Emericella nidulans (strain FGSC A4 / ATCC 38163 / CBS 112.46 / NRRL 194 / M139) (Aspergillus nidulans).